We begin with the raw amino-acid sequence, 627 residues long: UvrABC system protein C (627 aa).

In terms of domain architecture, GIY-YIG spans 22–100 (NNPGVYRMFN…IKRLRPRFNV (79 aa)). The UVR domain occupies 210–245 (QSVKDHLAAAMQAASADLDFEHAAVYRDRLAALSHV).

The protein belongs to the UvrC family. As to quaternary structure, interacts with UvrB in an incision complex.

It is found in the cytoplasm. In terms of biological role, the UvrABC repair system catalyzes the recognition and processing of DNA lesions. UvrC both incises the 5' and 3' sides of the lesion. The N-terminal half is responsible for the 3' incision and the C-terminal half is responsible for the 5' incision. This is UvrABC system protein C from Brucella abortus biovar 1 (strain 9-941).